Here is a 583-residue protein sequence, read N- to C-terminus: uncharacterized protein (583 aa).

This is an uncharacterized protein from Schizosaccharomyces pombe (strain 972 / ATCC 24843) (Fission yeast).